Consider the following 97-residue polypeptide: YcgL domain-containing protein PSPTO_3921 (97 aa).

A YcgL domain is found at 3–87; sequence RICSIYRSPK…AEDEYIEHLP (85 aa).

This chain is YcgL domain-containing protein PSPTO_3921, found in Pseudomonas syringae pv. tomato (strain ATCC BAA-871 / DC3000).